The following is a 510-amino-acid chain: Histidine ammonia-lyase (510 aa).

Positions Ala143–Gly145 form a cross-link, 5-imidazolinone (Ala-Gly). The residue at position 144 (Ser144) is a 2,3-didehydroalanine (Ser).

It belongs to the PAL/histidase family. In terms of processing, contains an active site 4-methylidene-imidazol-5-one (MIO), which is formed autocatalytically by cyclization and dehydration of residues Ala-Ser-Gly.

Its subcellular location is the cytoplasm. The enzyme catalyses L-histidine = trans-urocanate + NH4(+). It participates in amino-acid degradation; L-histidine degradation into L-glutamate; N-formimidoyl-L-glutamate from L-histidine: step 1/3. The polypeptide is Histidine ammonia-lyase (Aliivibrio fischeri (strain MJ11) (Vibrio fischeri)).